The following is a 307-amino-acid chain: UDP-3-O-acyl-N-acetylglucosamine deacetylase (307 aa).

Residues H78, H237, and D241 each contribute to the Zn(2+) site. H264 functions as the Proton donor in the catalytic mechanism.

It belongs to the LpxC family. Requires Zn(2+) as cofactor.

It catalyses the reaction a UDP-3-O-[(3R)-3-hydroxyacyl]-N-acetyl-alpha-D-glucosamine + H2O = a UDP-3-O-[(3R)-3-hydroxyacyl]-alpha-D-glucosamine + acetate. It functions in the pathway glycolipid biosynthesis; lipid IV(A) biosynthesis; lipid IV(A) from (3R)-3-hydroxytetradecanoyl-[acyl-carrier-protein] and UDP-N-acetyl-alpha-D-glucosamine: step 2/6. In terms of biological role, catalyzes the hydrolysis of UDP-3-O-myristoyl-N-acetylglucosamine to form UDP-3-O-myristoylglucosamine and acetate, the committed step in lipid A biosynthesis. This is UDP-3-O-acyl-N-acetylglucosamine deacetylase from Azoarcus sp. (strain BH72).